A 348-amino-acid polypeptide reads, in one-letter code: Fe-S cluster assembly protein DRE2 (348 aa).

The tract at residues 1–185 is N-terminal SAM-like domain; sequence MSGEKSSLLL…KKPESPRASV (185 aa). Disordered regions lie at residues 128–148 and 162–213; these read QTAP…SKSL and KKAE…TASK. Positions 186-241 are linker; sequence VAEDLDDGDELDGMNEDDSNSDELTASKSKFFDDVAGQDSADSIDEDDLVDDAEKS. Positions 188–206 are enriched in acidic residues; the sequence is EDLDDGDELDGMNEDDSNS. Cys248, Cys259, Cys262, and Cys264 together coordinate [2Fe-2S] cluster. A fe-S binding site A region spans residues 248 to 264; it reads CGKTKTRRRKACKDCTC. [4Fe-4S] cluster contacts are provided by Cys311, Cys314, Cys322, and Cys325. Short sequence motifs (cx2C motif) lie at residues 311–314 and 322–325; these read CGSC and CSGC. The tract at residues 311 to 325 is fe-S binding site B; the sequence is CGSCSLGDAFRCSGC.

The protein belongs to the anamorsin family. Monomer. Interacts with TAH18. Interacts with MIA40. It depends on [2Fe-2S] cluster as a cofactor. Requires [4Fe-4S] cluster as cofactor.

It localises to the cytoplasm. Its subcellular location is the mitochondrion intermembrane space. Component of the cytosolic iron-sulfur (Fe-S) protein assembly (CIA) machinery required for the maturation of extramitochondrial Fe-S proteins. Part of an electron transfer chain functioning in an early step of cytosolic Fe-S biogenesis, facilitating the de novo assembly of a [4Fe-4S] cluster on the scaffold complex CFD1-NBP35. Electrons are transferred to DRE2 from NADPH via the FAD- and FMN-containing protein TAH18. TAH18-DRE2 are also required for the assembly of the diferric tyrosyl radical cofactor of ribonucleotide reductase (RNR), probably by providing electrons for reduction during radical cofactor maturation in the catalytic small subunit RNR2. This is Fe-S cluster assembly protein DRE2 from Lachancea thermotolerans (strain ATCC 56472 / CBS 6340 / NRRL Y-8284) (Yeast).